Consider the following 150-residue polypeptide: Deoxyuridine 5'-triphosphate nucleotidohydrolase (150 aa).

Substrate contacts are provided by residues R69 to G71, N82, L86 to D88, and K96.

Belongs to the dUTPase family. Mg(2+) is required as a cofactor.

The catalysed reaction is dUTP + H2O = dUMP + diphosphate + H(+). It participates in pyrimidine metabolism; dUMP biosynthesis; dUMP from dCTP (dUTP route): step 2/2. In terms of biological role, this enzyme is involved in nucleotide metabolism: it produces dUMP, the immediate precursor of thymidine nucleotides and it decreases the intracellular concentration of dUTP so that uracil cannot be incorporated into DNA. This is Deoxyuridine 5'-triphosphate nucleotidohydrolase from Neisseria gonorrhoeae (strain NCCP11945).